A 585-amino-acid chain; its full sequence is Stage II sporulation protein E (585 aa).

A run of 2 helical transmembrane segments spans residues 40 to 57 (LGAR…GLYA) and 70 to 86 (SLTA…FVLK). One can recognise a PPM-type phosphatase domain in the interval 355–565 (DTGVAHAAKG…DDMTVVVAKL (211 aa)).

The protein resides in the cell membrane. The catalysed reaction is O-phospho-L-seryl-[protein] + H2O = L-seryl-[protein] + phosphate. It carries out the reaction O-phospho-L-threonyl-[protein] + H2O = L-threonyl-[protein] + phosphate. In terms of biological role, normally needed for pro-sigma E processing during sporulation but can be bypassed in vegetative cells. Activates SpoIIAA by dephosphorylation. This Priestia megaterium (Bacillus megaterium) protein is Stage II sporulation protein E (spoIIE).